Here is a 211-residue protein sequence, read N- to C-terminus: Probable septum site-determining protein MinC (211 aa).

It belongs to the MinC family. As to quaternary structure, interacts with MinD and FtsZ.

Functionally, cell division inhibitor that blocks the formation of polar Z ring septums. Rapidly oscillates between the poles of the cell to destabilize FtsZ filaments that have formed before they mature into polar Z rings. Prevents FtsZ polymerization. The chain is Probable septum site-determining protein MinC from Clostridium acetobutylicum (strain ATCC 824 / DSM 792 / JCM 1419 / IAM 19013 / LMG 5710 / NBRC 13948 / NRRL B-527 / VKM B-1787 / 2291 / W).